The following is a 114-amino-acid chain: Protein ORF3 (114 aa).

Hydrophobic stretches follow at residues 6-22 and 33-53; these read CALGLFCCCSSCFCLCC and AVVGGAAAVPAVVSGVTGLIL. Residues 28–68 form an interaction with host HPX region; sequence VSRLAAVVGGAAAVPAVVSGVTGLILSPSQSPIFIQPTPSP. The interval 48 to 72 is interaction with the capsid protein; that stretch reads VTGLILSPSQSPIFIQPTPSPPMSP. Ser-71 carries the phosphoserine; by host modification. Residues 72–114 form a homodimerization, and interaction with host AMBP/bikunin region; it reads PLRPGLDLVFANPPDHSAPLGVTRPSAPPLPHVVDLPQLGPRR. Positions 91 to 114 are disordered; sequence LGVTRPSAPPLPHVVDLPQLGPRR. Positions 95–104 are interaction with host SRC, HCK, FYN, PIK3R3 and GRB2; sequence RPSAPPLPHV. Residues 96-99 carry the PTAP/PSAP motif motif; that stretch reads PSAP.

It belongs to the hepevirus ORF3 protein family. In terms of assembly, forms homooligomers. Interacts with host SRC, HCK, FYN, PIK3R3 and GRB2 (via SH3 domain); binding does not activate the kinases. Interacts with host AMBP/bikunin and AMBP/alpha-1-microglobulin peptides. Interacts with host HPX/hemopexin. Interacts (when phosphorylated) with capsid protein ORF2. Interacts with host TSG101; this interaction plays a role in viral release from the host cell. Interacts with host SIRPA; this interaction down-regulates the phosphorylation of host IRF3. Post-translationally, palmitoylated in the N-terminus.

It is found in the host endoplasmic reticulum membrane. The protein localises to the host cytoplasm. The protein resides in the host cytoskeleton. It localises to the virion. Its subcellular location is the host cell membrane. Small multifunctional phosphoprotein involved in virion morphogenesis, egress and counteracting host innate immunity. Plays critical roles in the final steps of viral release by interacting with host TSG101, a member of the vacuolar protein-sorting pathway and using other cellular host proteins involved in vesicle formation pathway. Also acts as a viroporin and forms ion conductive pores allowing viral particle release. Impairs the generation of type I interferon by down-regulating host TLR3 and TLR7 as well as their downstream signaling pathways. Down-regulates the phosphorylation of host IRF3 via the interaction with host SIRP-alpha, thereby inhibiting IFN-I expression. Interacts with host microtubules. In Hepatitis E virus genotype 1 (isolate Human/Burma) (HEV-1), this protein is Protein ORF3.